The following is a 499-amino-acid chain: Glycerol kinase (499 aa).

Residue Thr-17 participates in ADP binding. Residues Thr-17, Thr-18, and Ser-19 each coordinate ATP. Thr-17 is a binding site for sn-glycerol 3-phosphate. Arg-21 lines the ADP pocket. Residues Arg-87, Glu-88, Tyr-139, and Asp-243 each contribute to the sn-glycerol 3-phosphate site. Arg-87, Glu-88, Tyr-139, Asp-243, and Gln-244 together coordinate glycerol. Thr-265 and Gly-308 together coordinate ADP. Residues Thr-265, Gly-308, Gln-312, and Gly-409 each contribute to the ATP site. Positions 409 and 413 each coordinate ADP.

This sequence belongs to the FGGY kinase family.

The enzyme catalyses glycerol + ATP = sn-glycerol 3-phosphate + ADP + H(+). It functions in the pathway polyol metabolism; glycerol degradation via glycerol kinase pathway; sn-glycerol 3-phosphate from glycerol: step 1/1. Inhibited by fructose 1,6-bisphosphate (FBP). Key enzyme in the regulation of glycerol uptake and metabolism. Catalyzes the phosphorylation of glycerol to yield sn-glycerol 3-phosphate. The chain is Glycerol kinase from Pseudomonas entomophila (strain L48).